The chain runs to 1235 residues: ATP-dependent helicase/nuclease subunit A (1235 aa).

Residues 4-470 (REYTLSQKQA…IILAENFRSM (467 aa)) form the UvrD-like helicase ATP-binding domain. Residue 25 to 32 (ASAGSGKT) participates in ATP binding. Residues 501-795 (QFGAKYYPDE…KLMTIHGSKG (295 aa)) enclose the UvrD-like helicase C-terminal domain.

This sequence belongs to the helicase family. AddA subfamily. Heterodimer of AddA and AddB/RexB. The cofactor is Mg(2+).

The catalysed reaction is Couples ATP hydrolysis with the unwinding of duplex DNA by translocating in the 3'-5' direction.. It carries out the reaction ATP + H2O = ADP + phosphate + H(+). The heterodimer acts as both an ATP-dependent DNA helicase and an ATP-dependent, dual-direction single-stranded exonuclease. Recognizes the chi site generating a DNA molecule suitable for the initiation of homologous recombination. The AddA nuclease domain is required for chi fragment generation; this subunit has the helicase and 3' -&gt; 5' nuclease activities. The sequence is that of ATP-dependent helicase/nuclease subunit A from Pediococcus pentosaceus (strain ATCC 25745 / CCUG 21536 / LMG 10740 / 183-1w).